We begin with the raw amino-acid sequence, 139 residues long: Orientotoxin-2 (139 aa).

Expressed by the venom gland.

Its subcellular location is the secreted. It catalyses the reaction a 1,2-diacyl-sn-glycero-3-phosphocholine + H2O = a 1-acyl-sn-glycero-3-phosphocholine + a fatty acid + H(+). Has a highly toxic phospholipase A2 activity. The sequence is that of Orientotoxin-2 from Vespa orientalis (Oriental hornet).